The following is a 429-amino-acid chain: Patatin-like phospholipase domain-containing protein 5 (429 aa).

The PNPLA domain maps to 12–181; the sequence is LSFSGAGYLG…SNNLPFADCP (170 aa). A GXGXXG motif is present at residues 16–21; that stretch reads GAGYLG. Positions 47–51 match the GXSXG motif; the sequence is GSSSG. S49 (nucleophile) is an active-site residue. Residue D168 is the Proton acceptor of the active site. The DGA/G signature appears at 168–170; that stretch reads DGA.

Expressed in brain and pituitary gland.

It carries out the reaction a triacylglycerol + H2O = a diacylglycerol + a fatty acid + H(+). In terms of biological role, has abundant triacylglycerol lipase activity. The polypeptide is Patatin-like phospholipase domain-containing protein 5 (Homo sapiens (Human)).